A 100-amino-acid polypeptide reads, in one-letter code: High mobility group protein C (100 aa).

A DNA-binding region (HMG box) is located at residues 12 to 80 (PKRPLSAFFL…KYEKDMQAYE (69 aa)). The disordered stretch occupies residues 81 to 100 (KKYGKPEKQKKIKKNKKGSK). A compositionally biased stretch (basic residues) spans 90–100 (KKIKKNKKGSK).

Its subcellular location is the nucleus. It localises to the chromosome. This is High mobility group protein C from Tetrahymena thermophila.